The chain runs to 510 residues: Light-independent protochlorophyllide reductase subunit B (510 aa).

Residue Asp-36 coordinates [4Fe-4S] cluster. The Proton donor role is filled by Asp-296. 431-432 (GM) is a binding site for substrate.

Belongs to the ChlB/BchB/BchZ family. As to quaternary structure, protochlorophyllide reductase is composed of three subunits; ChlL, ChlN and ChlB. Forms a heterotetramer of two ChlB and two ChlN subunits. It depends on [4Fe-4S] cluster as a cofactor.

The catalysed reaction is chlorophyllide a + oxidized 2[4Fe-4S]-[ferredoxin] + 2 ADP + 2 phosphate = protochlorophyllide a + reduced 2[4Fe-4S]-[ferredoxin] + 2 ATP + 2 H2O. The protein operates within porphyrin-containing compound metabolism; chlorophyll biosynthesis (light-independent). Functionally, component of the dark-operative protochlorophyllide reductase (DPOR) that uses Mg-ATP and reduced ferredoxin to reduce ring D of protochlorophyllide (Pchlide) to form chlorophyllide a (Chlide). This reaction is light-independent. The NB-protein (ChlN-ChlB) is the catalytic component of the complex. This chain is Light-independent protochlorophyllide reductase subunit B, found in Synechococcus sp. (strain JA-3-3Ab) (Cyanobacteria bacterium Yellowstone A-Prime).